The sequence spans 51 residues: Large ribosomal subunit protein eL39 (51 aa).

The interval 32–51 (KGSVKQHPKMRHWRRNTLKK) is disordered. The span at 33-51 (GSVKQHPKMRHWRRNTLKK) shows a compositional bias: basic residues.

This sequence belongs to the eukaryotic ribosomal protein eL39 family.

The sequence is that of Large ribosomal subunit protein eL39 from Methanococcus vannielii (strain ATCC 35089 / DSM 1224 / JCM 13029 / OCM 148 / SB).